The sequence spans 627 residues: tRNA uridine 5-carboxymethylaminomethyl modification enzyme MnmG (627 aa).

FAD is bound by residues 13-18 (GGGHAG), Val-125, and Ser-180. An NAD(+)-binding site is contributed by 274–288 (GPRYCPSIEDKVVRF). Residue Gln-371 coordinates FAD.

It belongs to the MnmG family. Homodimer. Heterotetramer of two MnmE and two MnmG subunits. FAD serves as cofactor.

Its subcellular location is the cytoplasm. Its function is as follows. NAD-binding protein involved in the addition of a carboxymethylaminomethyl (cmnm) group at the wobble position (U34) of certain tRNAs, forming tRNA-cmnm(5)s(2)U34. This chain is tRNA uridine 5-carboxymethylaminomethyl modification enzyme MnmG, found in Francisella philomiragia subsp. philomiragia (strain ATCC 25017 / CCUG 19701 / FSC 153 / O#319-036).